The sequence spans 92 residues: uncharacterized protein (92 aa).

This is an uncharacterized protein from Archaeoglobus fulgidus (strain ATCC 49558 / DSM 4304 / JCM 9628 / NBRC 100126 / VC-16).